Here is a 292-residue protein sequence, read N- to C-terminus: NIF3-like protein 1 (292 aa).

It belongs to the GTP cyclohydrolase I type 2/NIF3 family.

The chain is NIF3-like protein 1 (anon-35F/36A) from Drosophila melanogaster (Fruit fly).